The chain runs to 188 residues: dCTP deaminase (188 aa).

Residues 111-116 (KSTYAR), 135-137 (TLE), Gln-156, Tyr-170, and Gln-180 each bind dCTP. The active-site Proton donor/acceptor is the Glu-137.

It belongs to the dCTP deaminase family. Homotrimer.

It carries out the reaction dCTP + H2O + H(+) = dUTP + NH4(+). Its pathway is pyrimidine metabolism; dUMP biosynthesis; dUMP from dCTP (dUTP route): step 1/2. Functionally, catalyzes the deamination of dCTP to dUTP. This Ectopseudomonas mendocina (strain ymp) (Pseudomonas mendocina) protein is dCTP deaminase.